The sequence spans 306 residues: UDP-3-O-acyl-N-acetylglucosamine deacetylase (306 aa).

Positions 79, 238, and 242 each coordinate Zn(2+). The active-site Proton donor is the His-265.

It belongs to the LpxC family. It depends on Zn(2+) as a cofactor.

It catalyses the reaction a UDP-3-O-[(3R)-3-hydroxyacyl]-N-acetyl-alpha-D-glucosamine + H2O = a UDP-3-O-[(3R)-3-hydroxyacyl]-alpha-D-glucosamine + acetate. It functions in the pathway glycolipid biosynthesis; lipid IV(A) biosynthesis; lipid IV(A) from (3R)-3-hydroxytetradecanoyl-[acyl-carrier-protein] and UDP-N-acetyl-alpha-D-glucosamine: step 2/6. Catalyzes the hydrolysis of UDP-3-O-myristoyl-N-acetylglucosamine to form UDP-3-O-myristoylglucosamine and acetate, the committed step in lipid A biosynthesis. This Shewanella sp. (strain ANA-3) protein is UDP-3-O-acyl-N-acetylglucosamine deacetylase.